The chain runs to 454 residues: Gastrin/cholecystokinin type B receptor (454 aa).

The Extracellular portion of the chain corresponds to 1 to 57 (MELLKPNRSVLGSGPGPGASLCRSGGPLLNGSGTGNLSCEPPRIRGAGTRELELAIR). 3 N-linked (GlcNAc...) asparagine glycosylation sites follow: asparagine 7, asparagine 30, and asparagine 36. The chain crosses the membrane as a helical span at residues 58–79 (VTLYAVIFLMSVGGNVLIIVVL). Topologically, residues 80–87 (GLSRRLRT) are cytoplasmic. The helical transmembrane segment at 88-109 (VTNAFLLSLAVSDLLLAVACMP) threads the bilayer. Topologically, residues 110–131 (FTLLPNLMGTFIFGTVVCKAVS) are extracellular. Cysteine 127 and cysteine 205 are joined by a disulfide. The chain crosses the membrane as a helical span at residues 132–150 (YFMGVSVSVSTLSLVAIAL). Topologically, residues 151–170 (ERYSAICRPLQARVWQTRSH) are cytoplasmic. Residues 171-189 (AARVIVATWMLSGLLMVPY) form a helical membrane-spanning segment. Over 190–219 (PVYTAVQPAGPRVLQCMHRWPSARVRQTWS) the chain is Extracellular. A helical membrane pass occupies residues 220-242 (VLLLLLLFFVPGVVMAVAYGLIS). Residues 243-340 (RELYLGLRFD…KLLAKKRVVR (98 aa)) lie on the Cytoplasmic side of the membrane. The tract at residues 257 to 284 (SESQSRVGSQGGLPGGTGQGPAQANGRC) is disordered. The segment covering 265-275 (SQGGLPGGTGQ) has biased composition (gly residues). The chain crosses the membrane as a helical span at residues 341-362 (MLLVIVVLFFLCWLPVYSANTW). The Extracellular portion of the chain corresponds to 363-380 (RAFDGPGAHRALSGAPIS). The chain crosses the membrane as a helical span at residues 381–401 (FIHLLTYASACVNPLVYCFMH). The Cytoplasmic segment spans residues 402–454 (RRFRQACLDTCTRCCPRPPRARPRPLPDEDPPTPSIASLSRLSYTTISTLGPG). Cysteine 415 carries S-palmitoyl cysteine lipidation. Residues 422-441 (ARPRPLPDEDPPTPSIASLS) form a disordered region.

This sequence belongs to the G-protein coupled receptor 1 family.

It is found in the cell membrane. In terms of biological role, receptor for gastrin and cholecystokinin. The CCK-B receptors occur throughout the central nervous system where they modulate anxiety, analgesia, arousal, and neuroleptic activity. This receptor mediates its action by association with G proteins that activate a phosphatidylinositol-calcium second messenger system. The protein is Gastrin/cholecystokinin type B receptor (CCKBR) of Bos taurus (Bovine).